Consider the following 552-residue polypeptide: Urocanate hydratase (552 aa).

NAD(+) contacts are provided by residues 49–50 (GG), Q127, 173–175 (GMG), D193, 239–240 (NA), 260–264 (QTSAH), 270–271 (YI), and Y319. C407 is an active-site residue. G489 is a binding site for NAD(+).

This sequence belongs to the urocanase family. NAD(+) serves as cofactor.

The protein localises to the cytoplasm. The enzyme catalyses 4-imidazolone-5-propanoate = trans-urocanate + H2O. It participates in amino-acid degradation; L-histidine degradation into L-glutamate; N-formimidoyl-L-glutamate from L-histidine: step 2/3. Catalyzes the conversion of urocanate to 4-imidazolone-5-propionate. This Bacillus thuringiensis (strain Al Hakam) protein is Urocanate hydratase.